The primary structure comprises 196 residues: dITP/XTP pyrophosphatase (196 aa).

8–13 contributes to the substrate binding site; it reads TKNEGK. Residues Glu41 and Asp70 each coordinate Mg(2+). Residue Asp70 is the Proton acceptor of the active site. Residues Ser71, 153-156, Lys176, and 181-182 contribute to the substrate site; these read FGYD and HR.

It belongs to the HAM1 NTPase family. In terms of assembly, homodimer. Requires Mg(2+) as cofactor.

The enzyme catalyses XTP + H2O = XMP + diphosphate + H(+). The catalysed reaction is dITP + H2O = dIMP + diphosphate + H(+). It catalyses the reaction ITP + H2O = IMP + diphosphate + H(+). Its function is as follows. Pyrophosphatase that catalyzes the hydrolysis of nucleoside triphosphates to their monophosphate derivatives, with a high preference for the non-canonical purine nucleotides XTP (xanthosine triphosphate), dITP (deoxyinosine triphosphate) and ITP. Seems to function as a house-cleaning enzyme that removes non-canonical purine nucleotides from the nucleotide pool, thus preventing their incorporation into DNA/RNA and avoiding chromosomal lesions. The protein is dITP/XTP pyrophosphatase of Bacillus licheniformis (strain ATCC 14580 / DSM 13 / JCM 2505 / CCUG 7422 / NBRC 12200 / NCIMB 9375 / NCTC 10341 / NRRL NRS-1264 / Gibson 46).